A 428-amino-acid polypeptide reads, in one-letter code: Kynureninase (428 aa).

Pyridoxal 5'-phosphate contacts are provided by residues T104, T105, 132-135 (FPSD), D213, H216, and Y238. K239 is subject to N6-(pyridoxal phosphate)lysine. Positions 267 and 295 each coordinate pyridoxal 5'-phosphate.

Belongs to the kynureninase family. As to quaternary structure, homodimer. Pyridoxal 5'-phosphate serves as cofactor.

The enzyme catalyses L-kynurenine + H2O = anthranilate + L-alanine + H(+). The catalysed reaction is 3-hydroxy-L-kynurenine + H2O = 3-hydroxyanthranilate + L-alanine + H(+). It functions in the pathway amino-acid degradation; L-kynurenine degradation; L-alanine and anthranilate from L-kynurenine: step 1/1. The protein operates within cofactor biosynthesis; NAD(+) biosynthesis; quinolinate from L-kynurenine: step 2/3. In terms of biological role, catalyzes the cleavage of L-kynurenine (L-Kyn) and L-3-hydroxykynurenine (L-3OHKyn) into anthranilic acid (AA) and 3-hydroxyanthranilic acid (3-OHAA), respectively. This Bacillus anthracis protein is Kynureninase.